Consider the following 297-residue polypeptide: ATP phosphoribosyltransferase (297 aa).

This sequence belongs to the ATP phosphoribosyltransferase family.

The protein resides in the cytoplasm. It catalyses the reaction 1-(5-phospho-beta-D-ribosyl)-ATP + diphosphate = 5-phospho-alpha-D-ribose 1-diphosphate + ATP. Its pathway is amino-acid biosynthesis; L-histidine biosynthesis; L-histidine from 5-phospho-alpha-D-ribose 1-diphosphate: step 1/9. Functionally, catalyzes the condensation of ATP and 5-phosphoribose 1-diphosphate to form N'-(5'-phosphoribosyl)-ATP (PR-ATP). Has a crucial role in the pathway because the rate of histidine biosynthesis seems to be controlled primarily by regulation of the enzymatic activity. The polypeptide is ATP phosphoribosyltransferase (HIS1) (Eremothecium gossypii (strain ATCC 10895 / CBS 109.51 / FGSC 9923 / NRRL Y-1056) (Yeast)).